The following is a 220-amino-acid chain: Ribonuclease P protein subunit p29 (220 aa).

Serine 10 carries the phosphoserine modification.

This sequence belongs to the eukaryotic/archaeal RNase P protein component 1 family. Component of nuclear RNase P and RNase MRP ribonucleoproteins. RNase P consists of a catalytic RNA moiety and 10 different protein chains; POP1, POP4, POP5, POP7, RPP14, RPP21, RPP25, RPP30, RPP38 and RPP40. Within the RNase P complex, POP1, POP7 and RPP25 form the 'finger' subcomplex, POP5, RPP14, RPP40 and homodimeric RPP30 form the 'palm' subcomplex, and RPP21, POP4 and RPP38 form the 'wrist' subcomplex. All subunits of the RNase P complex interact with the catalytic RNA. Several subunits of RNase P are also part of the RNase MRP complex. RNase MRP consists of a catalytic RNA moiety and about 8 protein subunits; POP1, POP7, RPP25, RPP30, RPP38, RPP40 and possibly also POP4 and POP5.

Its subcellular location is the nucleus. The protein localises to the nucleolus. In terms of biological role, component of ribonuclease P, a ribonucleoprotein complex that generates mature tRNA molecules by cleaving their 5'-ends. This is Ribonuclease P protein subunit p29 (POP4) from Pongo abelii (Sumatran orangutan).